The chain runs to 301 residues: 1,5-anhydro-D-fructose reductase (301 aa).

Asp35 is a binding site for NADP(+). Tyr40 (proton donor) is an active-site residue. A substrate-binding site is contributed by His102. Residues Gln175 and 246-258 (IPKS…IREN) contribute to the NADP(+) site.

Belongs to the aldo/keto reductase family. As to quaternary structure, monomer.

Its subcellular location is the cytoplasm. The enzyme catalyses 1,5-anhydro-D-glucitol + NADP(+) = 1,5-anhydro-D-fructose + NADPH + H(+). Inhibited by p-chloromercuribenzoic acid and alkyliodines. In terms of biological role, catalyzes the NADPH-dependent reduction of 1,5-anhydro-D-fructose (AF) to 1,5-anhydro-D-glucitol. In Mus musculus (Mouse), this protein is 1,5-anhydro-D-fructose reductase (Akr1e2).